The sequence spans 64 residues: Large ribosomal subunit protein bL32 (64 aa).

The disordered stretch occupies residues 1–64 (MAVQQNRKTR…APKHGDETEE (64 aa)). Over residues 7–16 (RKTRSKRGMR) the composition is skewed to basic residues.

The protein belongs to the bacterial ribosomal protein bL32 family.

The protein is Large ribosomal subunit protein bL32 of Methylococcus capsulatus (strain ATCC 33009 / NCIMB 11132 / Bath).